An 87-amino-acid polypeptide reads, in one-letter code: Bradykinin-potentiating peptide NDBP12 (87 aa).

Residues 1 to 22 form the signal peptide; sequence MNKRVLLVIFFVTLLVADEVNS. Positions 64–75 are enriched in low complexity; that stretch reads PAEAPAPAAAAP. Residues 64–87 form a disordered region; the sequence is PAEAPAPAAAAPEEPPVEQRRRRR.

The protein belongs to the non-disulfide-bridged peptide (NDBP) superfamily. Long chain multifunctional peptide (group 2) family. Expressed by the venom gland.

It is found in the secreted. Functionally, inhibits angiotensin-converting enzyme (ACE), but does not serve as substrate for the enzyme. Potentiates bradykinin (BK) on the isolated guinea pig ileum as well as the isolated rat uterus for contraction. Also potentiates in vivo the depressor effect of BK on arterial blood pressure in the normotensive anesthetized rat. In Lychas mucronatus (Chinese swimming scorpion), this protein is Bradykinin-potentiating peptide NDBP12.